A 131-amino-acid chain; its full sequence is Small ribosomal subunit protein uS11 (131 aa).

The protein belongs to the universal ribosomal protein uS11 family. Part of the 30S ribosomal subunit. Interacts with proteins S7 and S18. Binds to IF-3.

Its function is as follows. Located on the platform of the 30S subunit, it bridges several disparate RNA helices of the 16S rRNA. Forms part of the Shine-Dalgarno cleft in the 70S ribosome. In Exiguobacterium sibiricum (strain DSM 17290 / CCUG 55495 / CIP 109462 / JCM 13490 / 255-15), this protein is Small ribosomal subunit protein uS11.